The following is a 521-amino-acid chain: MSMSHPVSQSADKVIDHFTLFRQPEYKELFERKKTEFEYGPTPTKEVARVSAWTKTEEYKEKNLPVEAVVINPTKACQPIGAMLAAQGFEGTLPFVHGSQGCVSYYRTHLTRHFKEPNSAVSSSMTEDAAVFGGLNNMIDGLQRYALYKPKMIAVLTTCMAEVIGDDLSGFINNAKNKESVPADFPVPFAHTPAFVGSHIVGYDNMIKGVLTHFWGTSENFDTPKNETINLIPGFDGFAVGNNRELKRIAGLFGIQMTILSDVSDNFDTPADGEYRMYDGGTPLEATKEAVHAKATISMQEYCTPQSLQFIKREGPAGRQAYNYPMGVTGTDELLMKLAELSGKPSRGVKLERGRLVDAIADSHTHLHGKRFAVYGDPDFCLGMSKFLMELGAEPVHILSTSGSKKWEKQVQKVLDACRSASSGKAYGAKDLWHLRSLVFTDKVDYIIGNSYGKYLERDTKIPLIRLTYPIFDRHHHHRYPTWGYQGALNVLVRILDRIFEDMDANTNIVGETDYSFDLVR.

3 residues coordinate [8Fe-7S] cluster: cysteine 77, cysteine 102, and cysteine 159.

It belongs to the NifD/NifK/NifE/NifN family. Tetramer of two alpha and two beta chains. Forms complex with the iron protein (nitrogenase component 2). [8Fe-7S] cluster is required as a cofactor.

It carries out the reaction N2 + 8 reduced [2Fe-2S]-[ferredoxin] + 16 ATP + 16 H2O = H2 + 8 oxidized [2Fe-2S]-[ferredoxin] + 2 NH4(+) + 16 ADP + 16 phosphate + 6 H(+). In terms of biological role, this molybdenum-iron protein is part of the nitrogenase complex that catalyzes the key enzymatic reactions in nitrogen fixation. This Azospirillum brasilense protein is Nitrogenase molybdenum-iron protein beta chain (nifK).